Reading from the N-terminus, the 184-residue chain is Small ribosomal subunit protein eS8 (184 aa).

A disordered region spans residues methionine 1–lysine 23. Residues serine 7–lysine 23 are compositionally biased toward basic residues.

It belongs to the eukaryotic ribosomal protein eS8 family.

This Theileria annulata protein is Small ribosomal subunit protein eS8 (RPS8).